The primary structure comprises 201 residues: Aminoglycoside N(6')-acetyltransferase type 1 (201 aa).

The region spanning 25–192 (VTLRLMTEHD…PAVYMVQTRQ (168 aa)) is the N-acetyltransferase domain. 2 residues coordinate substrate: Trp-51 and Asp-154. Asn-159 serves as a coordination point for acetyl-CoA.

Homodimer.

It catalyses the reaction kanamycin B + acetyl-CoA = N(6')-acetylkanamycin B + CoA + H(+). In terms of biological role, catalyzes the transfer of an acetyl group from acetyl-CoA to the 6'-amino group of aminoglycoside molecules conferring resistance to antibiotics containing the purpurosamine ring including amikacin and kanamycin. This chain is Aminoglycoside N(6')-acetyltransferase type 1 (aacA4), found in Serratia marcescens.